A 128-amino-acid chain; its full sequence is EPIDERMAL PATTERNING FACTOR-like protein 2 (128 aa).

The first 28 residues, 1–28 (MVWSSNMSSFLLILLILNSTHFSLMANG), serve as a signal peptide directing secretion. Intrachain disulfides connect C60–C119, C65–C71, and C68–C121. The segment covering 79–90 (NPQTKLHSPLTT) has biased composition (polar residues). The interval 79-100 (NPQTKLHSPLTTSSSSSSETIH) is disordered.

Belongs to the plant cysteine rich small secretory peptide family. Epidermal patterning factor subfamily.

The protein resides in the secreted. Controls stomatal patterning. The sequence is that of EPIDERMAL PATTERNING FACTOR-like protein 2 from Arabidopsis thaliana (Mouse-ear cress).